The primary structure comprises 1145 residues: Protein STU1 (1145 aa).

HEAT repeat units lie at residues 96–134 (TLPLVVDKLGDQKDKFRSLASHSLVTLFSVAPADVEKYV) and 168–206 (YVPVLMELLEDADGMVRDAAKNTVIELFRSAPNAAKSDL). 3 disordered regions span residues 226 to 271 (ELIP…GIDT), 510 to 793 (LLNK…VVDP), and 816 to 839 (PEPVIEPTPEPSASMQADQAPAAS). Residues 229–239 (PTSSRPETPAA) are compositionally biased toward low complexity. Residues 535 to 545 (SKSTMGTSKPS) are compositionally biased toward polar residues. Low complexity-rich tracts occupy residues 580 to 594 (TTTTSSASSKSSGAR), 663 to 676 (ASHASESSLASPSS), and 696 to 708 (QSQSTMLSMSSPS).

Belongs to the CLASP family. As to quaternary structure, interacts with microtubules.

Its subcellular location is the cytoplasm. It is found in the cytoskeleton. The protein resides in the nucleus. The protein localises to the spindle. Functionally, microtubule binding protein that promotes the stabilization of dynamic microtubules. Required for mitotic spindle formation. This Gibberella zeae (strain ATCC MYA-4620 / CBS 123657 / FGSC 9075 / NRRL 31084 / PH-1) (Wheat head blight fungus) protein is Protein STU1 (STU1).